The primary structure comprises 776 residues: Ion-translocating oxidoreductase complex subunit C (776 aa).

4Fe-4S ferredoxin-type domains are found at residues 368-397 (MGAP…QQLY) and 407-436 (KATA…VQYF). [4Fe-4S] cluster is bound by residues Cys-377, Cys-380, Cys-383, Cys-387, Cys-416, Cys-419, Cys-422, and Cys-426. 5 stretches are compositionally biased toward basic and acidic residues: residues 534 to 543 (ARARQAEKVQ), 597 to 611 (ADEK…RKAA), 633 to 647 (ADEK…RKAA), 669 to 683 (ADEK…RKAA), and 705 to 719 (ADEK…RKAT). The tract at residues 534 to 754 (ARARQAEKVQ…ENEAEDPRKA (221 aa)) is disordered. Over residues 721 to 743 (EAAIARAKARKAAQAGERAQAAN) the composition is skewed to low complexity.

This sequence belongs to the 4Fe4S bacterial-type ferredoxin family. RnfC subfamily. As to quaternary structure, the complex is composed of six subunits: RnfA, RnfB, RnfC, RnfD, RnfE and RnfG. [4Fe-4S] cluster is required as a cofactor.

It is found in the cell inner membrane. Its function is as follows. Part of a membrane-bound complex that couples electron transfer with translocation of ions across the membrane. The chain is Ion-translocating oxidoreductase complex subunit C from Cronobacter sakazakii (strain ATCC BAA-894) (Enterobacter sakazakii).